Here is a 456-residue protein sequence, read N- to C-terminus: Dihydroorotase (456 aa).

Residues His60 and His62 each contribute to the Zn(2+) site. Residues 62-64 (HFR) and Asn94 each bind substrate. Zn(2+)-binding residues include Glu146, His180, His234, and Asp313. Residue Asp313 is part of the active site. His317 contacts substrate.

The protein belongs to the metallo-dependent hydrolases superfamily. DHOase family. Class I DHOase subfamily. It depends on Zn(2+) as a cofactor.

It catalyses the reaction (S)-dihydroorotate + H2O = N-carbamoyl-L-aspartate + H(+). Its pathway is pyrimidine metabolism; UMP biosynthesis via de novo pathway; (S)-dihydroorotate from bicarbonate: step 3/3. Functionally, catalyzes the reversible cyclization of carbamoyl aspartate to dihydroorotate. This Methanosarcina mazei (strain ATCC BAA-159 / DSM 3647 / Goe1 / Go1 / JCM 11833 / OCM 88) (Methanosarcina frisia) protein is Dihydroorotase.